Consider the following 893-residue polypeptide: NEDD4-binding protein 1 (893 aa).

The 85-residue stretch at 59-143 (QEAVHSAKEY…IQQFVKLFES (85 aa)) folds into the KH-like domain. The disordered stretch occupies residues 213–243 (EYTQSAATGPSSARDEVVVQEDSRNKARTPV). The segment covering 214-223 (YTQSAATGPS) has biased composition (polar residues). Over residues 225–237 (ARDEVVVQEDSRN) the composition is skewed to basic and acidic residues. A Phosphothreonine modification is found at threonine 241. Phosphoserine is present on residues serine 257, serine 269, and serine 299. Disordered stretches follow at residues 273-339 (DALS…DGKD), 394-433 (RDFPPCTVYPDASQSRNAGVGSTTNELTADSTPKKAQSHT), and 472-564 (IWGS…PPLP). 2 stretches are compositionally biased toward polar residues: residues 405–433 (ASQSRNAGVGSTTNELTADSTPKKAQSHT) and 523–537 (GFQQQTEPLLPNNTK). The segment covering 551–564 (QPKPNYPPLSPPLP) has biased composition (pro residues). Residue serine 560 is modified to Phosphoserine. The 153-residue stretch at 615–767 (LKHIVIDGSN…LGRNGPRLEE (153 aa)) folds into the RNase NYN domain. Positions 793–820 (PGFRSPSTQVANNSHQPPPRIQTSSSPW) are disordered. Over residues 797 to 820 (SPSTQVANNSHQPPPRIQTSSSPW) the composition is skewed to polar residues. The segment at 846–893 (RSSAETSELREALLKIFPDSEQKLKIDQILAAHPYMKDLNALSALVLD) is coCUN.

Belongs to the N4BP1 family. Interacts with NEDD4. Interacts with ITCH (via WW domain 2). Post-translationally, proteolytically cleaved by CASP8 downstream of TLR3 or TLR4, leading to its inactivation. Mainly cleaved at Asp-488 by CASP8. Cleaved by caspase-like protein MALT1, leading to its inactivation. Mono- and polyubiquitinated on the CoCUN region. Monoubiquitinated by NEDD4. Polyubiquitinated, leading to its degradation by the proteasome. Sumoylated with SUMO1, abrogating polyubiquitination and subsequent degradation. Desumoylated by SENP1, leading to accumulation in PML nuclear bodies.

The protein localises to the cytoplasm. The protein resides in the cytosol. It is found in the nucleus. Its subcellular location is the nucleolus. It localises to the PML body. Its activity is regulated as follows. Proteolytic cleavage by CASP8 or MALT1 leads to its inactivation. Functionally, potent suppressor of cytokine production that acts as a regulator of innate immune signaling and inflammation. Acts as a key negative regulator of select cytokine and chemokine responses elicited by TRIF-independent Toll-like receptors (TLRs), thereby limiting inflammatory cytokine responses to minor insults. In response to more threatening pathogens, cleaved by CASP8 downstream of TLR3 or TLR4, leading to its inactivation, thereby allowing production of inflammatory cytokines. Acts as a restriction factor against some viruses: restricts viral replication by binding to mRNA viruses and mediating their degradation via its ribonuclease activity. Also acts as an inhibitor of the E3 ubiquitin-protein ligase ITCH: acts by interacting with the second WW domain of ITCH, leading to compete with ITCH's substrates and impairing ubiquitination of substrates. The sequence is that of NEDD4-binding protein 1 from Mus musculus (Mouse).